The following is a 178-amino-acid chain: MSAKEGSSHPSYAEIVREHAPEQTAAEKAAPQPPEVEEVLSEEPYQKNEKVVVLDEEDADAFLHPEEAEAKKESEKPSDGEKKGKTEKLEKEAKSVYSKACNFVNAHKVPASAAISINLLSLGAISAYLLKSRQSGTLNNRTLCTCTAIAGIVFTISAVFSKTPKTACCASKKSNKST.

The segment at 1–89 is disordered; that stretch reads MSAKEGSSHP…GEKKGKTEKL (89 aa). 2 stretches are compositionally biased toward basic and acidic residues: residues 44–53 and 61–89; these read PYQKNEKVVV and AFLHPEEAEAKKESEKPSDGEKKGKTEKL.

This is an uncharacterized protein from Schizosaccharomyces pombe (strain 972 / ATCC 24843) (Fission yeast).